We begin with the raw amino-acid sequence, 141 residues long: Large ribosomal subunit protein uL11 (141 aa).

The protein belongs to the universal ribosomal protein uL11 family. Part of the ribosomal stalk of the 50S ribosomal subunit. Interacts with L10 and the large rRNA to form the base of the stalk. L10 forms an elongated spine to which L12 dimers bind in a sequential fashion forming a multimeric L10(L12)X complex. Post-translationally, one or more lysine residues are methylated.

In terms of biological role, forms part of the ribosomal stalk which helps the ribosome interact with GTP-bound translation factors. The sequence is that of Large ribosomal subunit protein uL11 from Desulfotalea psychrophila (strain LSv54 / DSM 12343).